An 865-amino-acid polypeptide reads, in one-letter code: Protein fluG (865 aa).

Residues 442–533 (PGVKYVWTQF…VMTWWKSEQG (92 aa)) enclose the GS beta-grasp domain. One can recognise a GS catalytic domain in the interval 540 to 865 (PRTNLLNINN…ARRKWLVERY (326 aa)).

The protein belongs to the glutamine synthetase family.

The protein localises to the cytoplasm. May function as a GSI-related enzyme in synthesizing a small diffusible factor that acts as an extracellular signal directing asexual sporulation and perhaps other aspects of colony growth. May be involved in brlA activation (an early transcriptional regulator for conidiation specific gene). The chain is Protein fluG (fluG) from Emericella nidulans (strain FGSC A4 / ATCC 38163 / CBS 112.46 / NRRL 194 / M139) (Aspergillus nidulans).